We begin with the raw amino-acid sequence, 265 residues long: Transcription factor BHLH089 (265 aa).

The tract at residues 1 to 132 is disordered; sequence MDPAPTLAAE…PPPPEPPKQD (132 aa). Gly residues-rich tracts occupy residues 17-29 and 44-53; these read LGGG…GGRG and SRGGGGGGGA. Residues 95–105 show a composition bias toward polar residues; it reads SKSSGDNSSLR. The segment at 142 to 155 is basic motif; degenerate; it reads QATDSHSLAERARR. A bHLH domain is found at 142–192; sequence QATDSHSLAERARREKISERMKILQDLVPGCNKVIGKASVLDEIINYIQAL. Positions 156 to 192 are helix-loop-helix motif; sequence EKISERMKILQDLVPGCNKVIGKASVLDEIINYIQAL.

This sequence belongs to the bHLH protein family. In terms of assembly, interacts with RSS3.

It is found in the nucleus. Transcription factor that may regulate jasmonate-regulated genes. The protein is Transcription factor BHLH089 of Oryza sativa subsp. japonica (Rice).